The primary structure comprises 104 residues: Flagellar hook-basal body complex protein FliE (104 aa).

The protein belongs to the FliE family.

It localises to the bacterial flagellum basal body. The polypeptide is Flagellar hook-basal body complex protein FliE (Escherichia coli (strain 55989 / EAEC)).